We begin with the raw amino-acid sequence, 176 residues long: NAD(P)H-quinone oxidoreductase subunit I, chloroplastic (176 aa).

2 4Fe-4S ferredoxin-type domains span residues 55–84 and 95–124; these read GRIH…VDWE and LNYS…MTEE. 8 residues coordinate [4Fe-4S] cluster: cysteine 64, cysteine 67, cysteine 70, cysteine 74, cysteine 104, cysteine 107, cysteine 110, and cysteine 114.

It belongs to the complex I 23 kDa subunit family. NDH is composed of at least 16 different subunits, 5 of which are encoded in the nucleus. Requires [4Fe-4S] cluster as cofactor.

The protein localises to the plastid. The protein resides in the chloroplast thylakoid membrane. It catalyses the reaction a plastoquinone + NADH + (n+1) H(+)(in) = a plastoquinol + NAD(+) + n H(+)(out). It carries out the reaction a plastoquinone + NADPH + (n+1) H(+)(in) = a plastoquinol + NADP(+) + n H(+)(out). In terms of biological role, NDH shuttles electrons from NAD(P)H:plastoquinone, via FMN and iron-sulfur (Fe-S) centers, to quinones in the photosynthetic chain and possibly in a chloroplast respiratory chain. The immediate electron acceptor for the enzyme in this species is believed to be plastoquinone. Couples the redox reaction to proton translocation, and thus conserves the redox energy in a proton gradient. The polypeptide is NAD(P)H-quinone oxidoreductase subunit I, chloroplastic (Populus alba (White poplar)).